Here is a 169-residue protein sequence, read N- to C-terminus: Peptide methionine sulfoxide reductase MsrA 1 (169 aa).

C12 is an active-site residue.

This sequence belongs to the MsrA Met sulfoxide reductase family.

It catalyses the reaction L-methionyl-[protein] + [thioredoxin]-disulfide + H2O = L-methionyl-(S)-S-oxide-[protein] + [thioredoxin]-dithiol. The catalysed reaction is [thioredoxin]-disulfide + L-methionine + H2O = L-methionine (S)-S-oxide + [thioredoxin]-dithiol. Its function is as follows. Has an important function as a repair enzyme for proteins that have been inactivated by oxidation. Catalyzes the reversible oxidation-reduction of methionine sulfoxide in proteins to methionine. This chain is Peptide methionine sulfoxide reductase MsrA 1 (msrA1), found in Staphylococcus aureus (strain Mu50 / ATCC 700699).